A 407-amino-acid chain; its full sequence is Phosphonoacetate hydrolase (407 aa).

Positions 25, 64, 202, 206, 241, 242, and 368 each coordinate Zn(2+). Thr-64 and Asp-202 together coordinate substrate. The substrate site is built by His-242 and His-368.

This sequence belongs to the alkaline phosphatase family. PhnA subfamily. In terms of assembly, homodimer. Requires Zn(2+) as cofactor.

It catalyses the reaction phosphonoacetate + H2O = acetate + phosphate + H(+). In terms of biological role, specifically hydrolyzes phosphonoacetate. Does not have activity on other organophosphonates or acetates. This Pseudomonas putida (Arthrobacter siderocapsulatus) protein is Phosphonoacetate hydrolase.